Here is a 670-residue protein sequence, read N- to C-terminus: Catalase (670 aa).

Catalysis depends on residues His61 and Asn132. Tyr345 is a heme binding site.

This sequence belongs to the catalase family. In terms of assembly, homotetramer. The cofactor is heme.

The protein resides in the peroxisome matrix. The enzyme catalyses 2 H2O2 = O2 + 2 H2O. Functionally, catalyzes the degradation of hydrogen peroxide (H(2)O(2)) generated by peroxisomal oxidases to water and oxygen, thereby protecting cells from the toxic effects of hydrogen peroxide. This chain is Catalase, found in Penicillium janthinellum (Penicillium vitale).